The chain runs to 602 residues: Glutamine--fructose-6-phosphate aminotransferase [isomerizing] (602 aa).

Residue C2 is the Nucleophile; for GATase activity of the active site. A Glutamine amidotransferase type-2 domain is found at 2–217 (CGIVGVVGNT…DQELVIVKAD (216 aa)). The segment at 67-87 (IGHTRWATHGKPTEDNAHPHR) is disordered. Residues 77 to 87 (KPTEDNAHPHR) show a composition bias toward basic and acidic residues. SIS domains follow at residues 283 to 422 (IIKA…ANGN) and 455 to 592 (VREL…VDKP). K597 serves as the catalytic For Fru-6P isomerization activity.

In terms of assembly, homodimer.

The protein localises to the cytoplasm. It catalyses the reaction D-fructose 6-phosphate + L-glutamine = D-glucosamine 6-phosphate + L-glutamate. Catalyzes the first step in hexosamine metabolism, converting fructose-6P into glucosamine-6P using glutamine as a nitrogen source. The protein is Glutamine--fructose-6-phosphate aminotransferase [isomerizing] of Streptococcus pneumoniae serotype 4 (strain ATCC BAA-334 / TIGR4).